The chain runs to 218 residues: Octanoyltransferase (218 aa).

Positions 32–214 constitute a BPL/LPL catalytic domain; sequence VLTADEIWLV…HFTQLLGYND (183 aa). Residues 71-78, 143-145, and 156-158 each bind substrate; these read RGGQITYH, SLG, and GLA. C174 serves as the catalytic Acyl-thioester intermediate.

The protein belongs to the LipB family.

It localises to the cytoplasm. The enzyme catalyses octanoyl-[ACP] + L-lysyl-[protein] = N(6)-octanoyl-L-lysyl-[protein] + holo-[ACP] + H(+). Its pathway is protein modification; protein lipoylation via endogenous pathway; protein N(6)-(lipoyl)lysine from octanoyl-[acyl-carrier-protein]: step 1/2. Catalyzes the transfer of endogenously produced octanoic acid from octanoyl-acyl-carrier-protein onto the lipoyl domains of lipoate-dependent enzymes. Lipoyl-ACP can also act as a substrate although octanoyl-ACP is likely to be the physiological substrate. The sequence is that of Octanoyltransferase from Histophilus somni (strain 2336) (Haemophilus somnus).